We begin with the raw amino-acid sequence, 87 residues long: Small ribosomal subunit protein bS20 (87 aa).

The disordered stretch occupies residues 1–25 (MANTAQARKRARQSVQRNKHNSSLR). Basic residues predominate over residues 7–22 (ARKRARQSVQRNKHNS).

It belongs to the bacterial ribosomal protein bS20 family.

Binds directly to 16S ribosomal RNA. The polypeptide is Small ribosomal subunit protein bS20 (Bordetella bronchiseptica (strain ATCC BAA-588 / NCTC 13252 / RB50) (Alcaligenes bronchisepticus)).